The chain runs to 293 residues: Phosphatidylserine decarboxylase proenzyme (293 aa).

Active-site charge relay system; for autoendoproteolytic cleavage activity residues include aspartate 88, histidine 144, and serine 247. Serine 247 functions as the Schiff-base intermediate with substrate; via pyruvic acid; for decarboxylase activity in the catalytic mechanism. Position 247 is a pyruvic acid (Ser); by autocatalysis (serine 247).

The protein belongs to the phosphatidylserine decarboxylase family. PSD-B subfamily. Prokaryotic type I sub-subfamily. Heterodimer of a large membrane-associated beta subunit and a small pyruvoyl-containing alpha subunit. Pyruvate serves as cofactor. In terms of processing, is synthesized initially as an inactive proenzyme. Formation of the active enzyme involves a self-maturation process in which the active site pyruvoyl group is generated from an internal serine residue via an autocatalytic post-translational modification. Two non-identical subunits are generated from the proenzyme in this reaction, and the pyruvate is formed at the N-terminus of the alpha chain, which is derived from the carboxyl end of the proenzyme. The autoendoproteolytic cleavage occurs by a canonical serine protease mechanism, in which the side chain hydroxyl group of the serine supplies its oxygen atom to form the C-terminus of the beta chain, while the remainder of the serine residue undergoes an oxidative deamination to produce ammonia and the pyruvoyl prosthetic group on the alpha chain. During this reaction, the Ser that is part of the protease active site of the proenzyme becomes the pyruvoyl prosthetic group, which constitutes an essential element of the active site of the mature decarboxylase.

It localises to the cell membrane. It catalyses the reaction a 1,2-diacyl-sn-glycero-3-phospho-L-serine + H(+) = a 1,2-diacyl-sn-glycero-3-phosphoethanolamine + CO2. Its pathway is phospholipid metabolism; phosphatidylethanolamine biosynthesis; phosphatidylethanolamine from CDP-diacylglycerol: step 2/2. Its function is as follows. Catalyzes the formation of phosphatidylethanolamine (PtdEtn) from phosphatidylserine (PtdSer). This is Phosphatidylserine decarboxylase proenzyme from Xylella fastidiosa (strain 9a5c).